Consider the following 429-residue polypeptide: MRIPIKDVTPEIGHARIAGWVHEERDLGGLTFLLVRDRTGILQVTIPKKKVTPEVLAAVKEATRESVIECEGVVKATEKAPGGRELVPDMLRVVSRAETPLPLDVSEKVPAELDTRLDNRYLDLRKPRINAIFQIRNACLRAISEYLWDNGFTQVQTPKIVAAATEGGTELFPLAYFDKEAFLNQSPQLYKQMLMSAGFDRVFEIGAIFRAEEHNTVRHLNEATSIDIEMSFANEEDAMHVLENVVASAYQYVADHCGDALATLGITDFKVPTVPFPRITYKEAIEISTAGGEPLVFGDDLSTAAERIVGEKMGTMYFITEWPTSTRPFYTMPFEDRPEVCRAFDMMHPRMELTSGAQRCHIHSLLVEQIKAKGLNPDAFEFYLNPFRYGMPPHAGWGLGAERLVMTMLDLQNIREAVLFPRDRHRVSP.

E166 serves as a coordination point for L-aspartate. Positions 188–191 are aspartate; sequence QLYK. R210 lines the L-aspartate pocket. Residues 210–212, 218–220, and E352 each bind ATP; these read RAE and RHL. Mg(2+)-binding residues include E352 and S355. Residues S355 and R359 each coordinate L-aspartate. 400 to 403 is a binding site for ATP; sequence GAER.

It belongs to the class-II aminoacyl-tRNA synthetase family. Type 2 subfamily. Homodimer. Requires Mg(2+) as cofactor.

The protein resides in the cytoplasm. It catalyses the reaction tRNA(Asx) + L-aspartate + ATP = L-aspartyl-tRNA(Asx) + AMP + diphosphate. In terms of biological role, aspartyl-tRNA synthetase with relaxed tRNA specificity since it is able to aspartylate not only its cognate tRNA(Asp) but also tRNA(Asn). Reaction proceeds in two steps: L-aspartate is first activated by ATP to form Asp-AMP and then transferred to the acceptor end of tRNA(Asp/Asn). In Methanocorpusculum labreanum (strain ATCC 43576 / DSM 4855 / Z), this protein is Aspartate--tRNA(Asp/Asn) ligase.